A 1016-amino-acid polypeptide reads, in one-letter code: DENN domain-containing protein 1A (1016 aa).

The uDENN domain occupies 13–145; the sequence is FEVYVEVAYP…HRLPIPDPGV (133 aa). The 137-residue stretch at 162–298 folds into the cDENN domain; the sequence is ELPSIPENRN…VISSLKNRLK (137 aa). Positions 300 to 378 constitute a dDENN domain; that stretch reads VSTTTGDGVA…DGRLDLLNSG (79 aa). Residues 381–385 carry the FXDXF motif motif; it reads FSDVF. Residues 453 to 565 form a disordered region; that stretch reads DITENGCVSS…GPTPAPPDRA (113 aa). A Phosphoserine modification is found at S473. The span at 479 to 489 shows a compositional bias: basic and acidic residues; the sequence is QDPRLREDRRP. The span at 500-509 shows a compositional bias: basic residues; it reads PRPHVVRRPK. T519 carries the phosphothreonine modification. Phosphoserine occurs at positions 520, 522, 523, 536, 538, and 546. Residues 569–578 carry the Clathrin box motif; sequence DLLEDVFSSL. Phosphoserine is present on S592. The interval 681-737 is disordered; sequence LSPSIKEETPIPTPGSITIPRPQGRKTPELGIVPPPPTARPAKLQAAGGPLGDFSSE. Position 750 is a phosphoserine (S750). R760 bears the Omega-N-methylarginine mark. Disordered stretches follow at residues 763–783 and 935–1016; these read PQGP…AGTG and SARA…ETFE. Residues 954–970 are compositionally biased toward pro residues; sequence LLPPRPPQSLQPTPQPS. Basic and acidic residues-rich tracts occupy residues 977 to 988 and 1007 to 1016; these read DPFEDLLRKTKQ and QLRRQWETFE.

Interacts with RAB35. Interacts with clathrin and with the adapter protein complex 2, AP-2. Interacts with ITSN1 and SH3GL2. Interacts (when phosphorylated) with YWHAE. In terms of processing, phosphorylated on serine and/or threonine in an Akt-dependent manner. Phosphorylation probably regulates the guanine nucleotide exchange factor (GEF) activity, possibly by disrupting an intramolecular interaction between the DENN domain and the C-terminus of the protein, thereby relieving the autoinhibition.

It is found in the cytoplasmic vesicle. It localises to the clathrin-coated vesicle membrane. The protein resides in the presynaptic cell membrane. Its activity is regulated as follows. The guanine nucleotide exchange factor (GEF) activity is autoinhibited. Autoinhibition may be the result of intramolecular interaction between the DENN domain and the C-terminus, which is disrupted upon phosphorylation. Activation is regulated by Akt activation. Guanine nucleotide exchange factor (GEF) regulating clathrin-mediated endocytosis through RAB35 activation. Promotes the exchange of GDP to GTP, converting inactive GDP-bound RAB35 into its active GTP-bound form. Regulates clathrin-mediated endocytosis of synaptic vesicles and mediates exit from early endosomes. Binds phosphatidylinositol-phosphates (PtdInsPs), with some preference for PtdIns(3)P. In Mus musculus (Mouse), this protein is DENN domain-containing protein 1A (Dennd1a).